The primary structure comprises 23 residues: Coenzyme PQQ synthesis protein A (23 aa).

The segment at residues 15 to 19 (EVTLY) is a cross-link (pyrroloquinoline quinone (Glu-Tyr)).

It belongs to the PqqA family.

It participates in cofactor biosynthesis; pyrroloquinoline quinone biosynthesis. In terms of biological role, required for coenzyme pyrroloquinoline quinone (PQQ) biosynthesis. PQQ is probably formed by cross-linking a specific glutamate to a specific tyrosine residue and excising these residues from the peptide. The sequence is that of Coenzyme PQQ synthesis protein A from Klebsiella pneumoniae (strain 342).